A 154-amino-acid polypeptide reads, in one-letter code: CASP-like protein 5B2 (154 aa).

Residues 1-10 (MKKLLGGPGT) lie on the Cytoplasmic side of the membrane. Residues 11 to 31 (VCGLLLRIGQCASAAASIGVM) form a helical membrane-spanning segment. Topologically, residues 32–42 (VSAKEFSVHTA) are extracellular. Residues 43–63 (FCYLIASMGLQLLWSFGLACL) form a helical membrane-spanning segment. Residues 64-77 (DVYALRGKKDLQNP) are Cytoplasmic-facing. Residues 78 to 98 (ILVSLFVVGDWVTAMLSLAAA) form a helical membrane-spanning segment. Topologically, residues 99–129 (CSSAGVVVLYEKDIKYCNTQSQYPCLRYEVA) are extracellular. A helical membrane pass occupies residues 130–150 (VALSFVTWIQIAVSSHVTFWI). At 151–154 (LASV) the chain is on the cytoplasmic side.

The protein belongs to the Casparian strip membrane proteins (CASP) family. As to quaternary structure, homodimer and heterodimers. Expressed in the stele of the root.

The protein localises to the cell membrane. The sequence is that of CASP-like protein 5B2 from Arabidopsis thaliana (Mouse-ear cress).